We begin with the raw amino-acid sequence, 84 residues long: Putative membrane protein insertion efficiency factor (84 aa).

This sequence belongs to the UPF0161 family.

The protein resides in the cell inner membrane. Could be involved in insertion of integral membrane proteins into the membrane. In Shewanella amazonensis (strain ATCC BAA-1098 / SB2B), this protein is Putative membrane protein insertion efficiency factor.